Consider the following 280-residue polypeptide: ATP synthase gamma chain (280 aa).

It belongs to the ATPase gamma chain family. F-type ATPases have 2 components, CF(1) - the catalytic core - and CF(0) - the membrane proton channel. CF(1) has five subunits: alpha(3), beta(3), gamma(1), delta(1), epsilon(1). CF(0) has three main subunits: a, b and c.

Its subcellular location is the cell membrane. Produces ATP from ADP in the presence of a proton gradient across the membrane. The gamma chain is believed to be important in regulating ATPase activity and the flow of protons through the CF(0) complex. In Mycoplasma capricolum subsp. capricolum (strain California kid / ATCC 27343 / NCTC 10154), this protein is ATP synthase gamma chain.